We begin with the raw amino-acid sequence, 492 residues long: Heat shock factor protein 4 (492 aa).

A DNA-binding region spans residues 17-122 (VPAFLGKLWA…LLERVRRKVP (106 aa)). Residues 129–203 (SRWRPEDLSR…GPLQTGPSST (75 aa)) form a hydrophobic repeat HR-A/B region. The tract at residues 245–322 (LPETTLGLSP…ECDFCVTAPP (78 aa)) is interactions with DUSP26, MAPK1 and MAPK2. Residues 263–282 (SDIPEDSPSPEGHRLSPSGG) form a disordered region. K293 participates in a covalent cross-link: Glycyl lysine isopeptide (Lys-Gly) (interchain with G-Cter in SUMO). S298 carries the phosphoserine modification. Residues 337–378 (GSYSPEGPRSVQQPEPRGPREVPDRGTLGLDRGNRSPESLLP) form a disordered region. A hydrophobic repeat HR-C region spans residues 364 to 389 (LGLDRGNRSPESLLPPMLLRPAPETL).

Belongs to the HSF family. As to quaternary structure, homotrimer. Exhibits constitutive DNA binding and forms trimers even in the absence of stress. Interacts with ALKBH4, DUSP26, MAPK1, MAPK2, MAPK8 and MAP kinase p38. In terms of processing, phosphorylated mainly on serine residues. Phosphorylation on Ser-298 promotes sumoylation on Lys-293. Isoform HSF4B is constitutively sumoylated. Sumoylation represses the transcriptional activity and is promoted by phosphorylation on Ser-298. HSFA is not sumoylated. In terms of tissue distribution, preferentially expressed in brain and lung. Also found in the eye. Slightly detected in liver and skeletal muscle. Isoform B is the major species in various tissues.

It is found in the nucleus. Its function is as follows. Heat-shock transcription factor that specifically binds heat shock promoter elements (HSE). Required for denucleation and organelle rupture and degradation that occur during eye lens terminal differentiation, when fiber cells that compose the lens degrade all membrane-bound organelles in order to provide lens with transparency to allow the passage of light. In this process, may regulate denucleation of lens fiber cells in part by activating DNASE2B transcription. May be involved in DNA repair through the transcriptional regulation of RAD51. May up-regulate p53/TP53 protein in eye lens fiber cells, possibly through protein stabilization. In the eye lens, controls the expression of alpha-crystallin B chain/CRYAB and consequently may be involved in the regulation of lysosomal acidification. Functionally, transcriptional repressor. Transcriptional activator. This chain is Heat shock factor protein 4 (Hsf4), found in Mus musculus (Mouse).